The sequence spans 214 residues: Pyrrolidone-carboxylate peptidase (214 aa).

Active-site residues include glutamate 80, cysteine 143, and histidine 166.

This sequence belongs to the peptidase C15 family. Homotetramer.

Its subcellular location is the cytoplasm. The enzyme catalyses Release of an N-terminal pyroglutamyl group from a polypeptide, the second amino acid generally not being Pro.. In terms of biological role, removes 5-oxoproline from various penultimate amino acid residues except L-proline. This is Pyrrolidone-carboxylate peptidase from Escherichia fergusonii (strain ATCC 35469 / DSM 13698 / CCUG 18766 / IAM 14443 / JCM 21226 / LMG 7866 / NBRC 102419 / NCTC 12128 / CDC 0568-73).